A 208-amino-acid polypeptide reads, in one-letter code: Large ribosomal subunit protein uL3 (208 aa).

Residues 117–147 (FQGVIKRHGQSRGPMAHGSRYHRRPGSMGPV) are disordered.

It belongs to the universal ribosomal protein uL3 family. As to quaternary structure, part of the 50S ribosomal subunit. Forms a cluster with proteins L14 and L19.

Functionally, one of the primary rRNA binding proteins, it binds directly near the 3'-end of the 23S rRNA, where it nucleates assembly of the 50S subunit. The protein is Large ribosomal subunit protein uL3 of Streptococcus equi subsp. zooepidemicus (strain H70).